We begin with the raw amino-acid sequence, 285 residues long: Bifunctional protein FolD (285 aa).

NADP(+)-binding positions include 165–167 and serine 190; that span reads GRS.

Belongs to the tetrahydrofolate dehydrogenase/cyclohydrolase family. Homodimer.

It catalyses the reaction (6R)-5,10-methylene-5,6,7,8-tetrahydrofolate + NADP(+) = (6R)-5,10-methenyltetrahydrofolate + NADPH. It carries out the reaction (6R)-5,10-methenyltetrahydrofolate + H2O = (6R)-10-formyltetrahydrofolate + H(+). It functions in the pathway one-carbon metabolism; tetrahydrofolate interconversion. Its function is as follows. Catalyzes the oxidation of 5,10-methylenetetrahydrofolate to 5,10-methenyltetrahydrofolate and then the hydrolysis of 5,10-methenyltetrahydrofolate to 10-formyltetrahydrofolate. This Burkholderia ambifaria (strain ATCC BAA-244 / DSM 16087 / CCUG 44356 / LMG 19182 / AMMD) (Burkholderia cepacia (strain AMMD)) protein is Bifunctional protein FolD.